An 81-amino-acid chain; its full sequence is Acyl carrier protein (81 aa).

One can recognise a Carrier domain in the interval 2 to 80 (ASNEEILAGL…DAVSYIASAQ (79 aa)). Serine 40 is modified (O-(pantetheine 4'-phosphoryl)serine).

It belongs to the acyl carrier protein (ACP) family. 4'-phosphopantetheine is transferred from CoA to a specific serine of apo-ACP by AcpS. This modification is essential for activity because fatty acids are bound in thioester linkage to the sulfhydryl of the prosthetic group.

The protein localises to the cytoplasm. It functions in the pathway lipid metabolism; fatty acid biosynthesis. Functionally, carrier of the growing fatty acid chain in fatty acid biosynthesis. The chain is Acyl carrier protein from Renibacterium salmoninarum (strain ATCC 33209 / DSM 20767 / JCM 11484 / NBRC 15589 / NCIMB 2235).